Consider the following 562-residue polypeptide: Wee1-like protein kinase 2 (562 aa).

2 disordered regions span residues 1-86 (MRTA…DKGV) and 161-181 (YRQA…DDCS). The span at 35-48 (HSNQRGSPVNSWRA) shows a compositional bias: polar residues. Positions 217–491 (FLEIEKIGAG…AKNSLLRRCV (275 aa)) constitute a Protein kinase domain. Residues 223-231 (IGAGEFGSV) and Lys-246 each bind ATP. Asp-344 (proton acceptor) is an active-site residue. Residues Asn-349 and Asp-381 each coordinate Mg(2+). Residues 494 to 520 (AAQLQKQLNVEKFKTAMLERELKAAKL) adopt a coiled-coil conformation.

The protein belongs to the protein kinase superfamily. Ser/Thr protein kinase family. WEE1 subfamily.

It is found in the nucleus. It catalyses the reaction L-tyrosyl-[protein] + ATP = O-phospho-L-tyrosyl-[protein] + ADP + H(+). Functionally, oocyte-specific protein tyrosine kinase that phosphorylates and inhibits cdk1 and acts as a regulator of meiosis. Required to maintain meiotic arrest in oocytes by phosphorylating cdk1 at 'Tyr-15', leading to inhibit cdk1 activity and prevent meiotic reentry. The protein is Wee1-like protein kinase 2 (wee2) of Xenopus tropicalis (Western clawed frog).